Here is a 364-residue protein sequence, read N- to C-terminus: Putative agmatine deiminase (364 aa).

Catalysis depends on C355, which acts as the Amidino-cysteine intermediate.

The protein belongs to the agmatine deiminase family.

It catalyses the reaction agmatine + H2O = N-carbamoylputrescine + NH4(+). The chain is Putative agmatine deiminase from Mycoplasma capricolum subsp. capricolum (strain California kid / ATCC 27343 / NCTC 10154).